A 118-amino-acid chain; its full sequence is Ribonuclease P protein component (118 aa).

The protein belongs to the RnpA family. Consists of a catalytic RNA component (M1 or rnpB) and a protein subunit.

The enzyme catalyses Endonucleolytic cleavage of RNA, removing 5'-extranucleotides from tRNA precursor.. In terms of biological role, RNaseP catalyzes the removal of the 5'-leader sequence from pre-tRNA to produce the mature 5'-terminus. It can also cleave other RNA substrates such as 4.5S RNA. The protein component plays an auxiliary but essential role in vivo by binding to the 5'-leader sequence and broadening the substrate specificity of the ribozyme. The chain is Ribonuclease P protein component from Vibrio cholerae serotype O1 (strain ATCC 39541 / Classical Ogawa 395 / O395).